A 414-amino-acid polypeptide reads, in one-letter code: Serine/threonine transporter SstT (414 aa).

A run of 8 helical transmembrane segments spans residues 16–36, 46–66, 84–104, 143–163, 180–200, 219–239, 300–320, and 332–352; these read GSLV…AWIS, LGTL…LMLV, ILFL…VFSF, ALLN…GFAL, AVTF…FGLV, LVVL…LLVF, MAGA…TLGV, and VVAS…LLLI.

It belongs to the dicarboxylate/amino acid:cation symporter (DAACS) (TC 2.A.23) family.

It localises to the cell inner membrane. It carries out the reaction L-serine(in) + Na(+)(in) = L-serine(out) + Na(+)(out). It catalyses the reaction L-threonine(in) + Na(+)(in) = L-threonine(out) + Na(+)(out). Functionally, involved in the import of serine and threonine into the cell, with the concomitant import of sodium (symport system). This is Serine/threonine transporter SstT from Salmonella dublin (strain CT_02021853).